A 235-amino-acid polypeptide reads, in one-letter code: MNKQFHSCSPDPDDGEKLDIDYLSDEGPSTLIFEPSELIDFRVAWDWQKQRQKLLFEKPGSSQAVWLLEHSECYTLGRGATEDNLLFNLSNSPWDVYRIDRGGEVTHHMPGQLVVYLVLDLRRYKTDLNWYLRQLELVLLDTLKDLGIVGKRIDGITGVWINDFKVASIGVGCRRWITQHGLSINVDCDLRGFERIIPCGLTGSKVGKLSSLIPDLKTVDVKPFIKKSLTERFGL.

One can recognise a BPL/LPL catalytic domain in the interval 59–235 (PGSSQAVWLL…KKSLTERFGL (177 aa)). Substrate is bound by residues 101 to 108 (RGGEVTHH), 168 to 170 (SIG), and 181 to 183 (GLS). Catalysis depends on cysteine 199, which acts as the Acyl-thioester intermediate.

Belongs to the LipB family.

The protein resides in the cytoplasm. The enzyme catalyses octanoyl-[ACP] + L-lysyl-[protein] = N(6)-octanoyl-L-lysyl-[protein] + holo-[ACP] + H(+). The protein operates within protein modification; protein lipoylation via endogenous pathway; protein N(6)-(lipoyl)lysine from octanoyl-[acyl-carrier-protein]: step 1/2. Its function is as follows. Catalyzes the transfer of endogenously produced octanoic acid from octanoyl-acyl-carrier-protein onto the lipoyl domains of lipoate-dependent enzymes. Lipoyl-ACP can also act as a substrate although octanoyl-ACP is likely to be the physiological substrate. The protein is Octanoyltransferase of Prochlorococcus marinus (strain MIT 9211).